Here is a 950-residue protein sequence, read N- to C-terminus: Glycine dehydrogenase (decarboxylating) (950 aa).

At Lys698 the chain carries N6-(pyridoxal phosphate)lysine.

The protein belongs to the GcvP family. As to quaternary structure, the glycine cleavage system is composed of four proteins: P, T, L and H. Pyridoxal 5'-phosphate serves as cofactor.

It catalyses the reaction N(6)-[(R)-lipoyl]-L-lysyl-[glycine-cleavage complex H protein] + glycine + H(+) = N(6)-[(R)-S(8)-aminomethyldihydrolipoyl]-L-lysyl-[glycine-cleavage complex H protein] + CO2. In terms of biological role, the glycine cleavage system catalyzes the degradation of glycine. The P protein binds the alpha-amino group of glycine through its pyridoxal phosphate cofactor; CO(2) is released and the remaining methylamine moiety is then transferred to the lipoamide cofactor of the H protein. This Neisseria meningitidis serogroup A / serotype 4A (strain DSM 15465 / Z2491) protein is Glycine dehydrogenase (decarboxylating).